Reading from the N-terminus, the 544-residue chain is Methionine--tRNA ligase (544 aa).

A 'HIGH' region motif is present at residues 10 to 20; sequence PYANGSLHLGH. 4 residues coordinate Zn(2+): Cys-141, Cys-144, Cys-153, and Cys-156. A 'KMSKS' region motif is present at residues 329–333; the sequence is KLSTS. Thr-332 lines the ATP pocket.

Belongs to the class-I aminoacyl-tRNA synthetase family. MetG type 1 subfamily. Monomer. It depends on Zn(2+) as a cofactor.

The protein localises to the cytoplasm. It carries out the reaction tRNA(Met) + L-methionine + ATP = L-methionyl-tRNA(Met) + AMP + diphosphate. In terms of biological role, is required not only for elongation of protein synthesis but also for the initiation of all mRNA translation through initiator tRNA(fMet) aminoacylation. This is Methionine--tRNA ligase from Bacillus cereus (strain Q1).